The primary structure comprises 203 residues: Ras-related protein Rab5A (203 aa).

A GTP-binding site is contributed by 18–26; the sequence is GDVGTGKSS. Residues 40 to 48 carry the Effector region motif; sequence QESTIGAAF. Residues 66-70, 124-127, and 154-155 each bind GTP; these read DTAGQ, NKAD, and SA. Residues cysteine 201 and cysteine 202 are each lipidated (S-geranylgeranyl cysteine).

Belongs to the small GTPase superfamily. Rab family. As to quaternary structure, interacts with VPS9A. Interacts with NSF and RBP-L. In terms of tissue distribution, highly expressed in roots. Expressed at low levels in shoots, flowers and grains.

It is found in the prevacuolar compartment membrane. It localises to the golgi apparatus membrane. Its subcellular location is the cell membrane. The protein localises to the protein storage vacuole membrane. Its function is as follows. Plays an important role in intracellular trafficking of seed storage proteins to the protein storage vacuoles (PSVs). Participates in the transport of the proglutelins from the Golgi apparatus to the PSVs in endosperm. Functions cooperatively with VPS9A to regulate post-Golgi dense vesicle-mediated transport of storage proteins to the type II protein bodies (PBII) protein storage vacuoles in developing endosperm. Involved in the maintenance of the general structural organization of the endomembrane system in developing endosperm. Binds GTP in vitro. Forms a quaternary complex with the two glutelin zipcode RNA-binding proteins RBP-L and RBP-P, and the membrane trafficking factor NSF. This quaternay complex carries glutelin mRNAs for active transport on endosomes to the cortical endoplasmic reticulum membrane, and enables endosome-mediated glutelin mRNA transport in endosperm cells. This chain is Ras-related protein Rab5A, found in Oryza sativa subsp. japonica (Rice).